Consider the following 758-residue polypeptide: Xaa-Pro dipeptidyl-peptidase (758 aa).

Active-site charge relay system residues include Ser-349, Asp-469, and His-499.

This sequence belongs to the peptidase S15 family. Homodimer.

The protein resides in the cytoplasm. It catalyses the reaction Hydrolyzes Xaa-Pro-|- bonds to release unblocked, N-terminal dipeptides from substrates including Ala-Pro-|-p-nitroanilide and (sequentially) Tyr-Pro-|-Phe-Pro-|-Gly-Pro-|-Ile.. Its function is as follows. Removes N-terminal dipeptides sequentially from polypeptides having unsubstituted N-termini provided that the penultimate residue is proline. This chain is Xaa-Pro dipeptidyl-peptidase, found in Streptococcus uberis (strain ATCC BAA-854 / 0140J).